We begin with the raw amino-acid sequence, 96 residues long: MNVLKEVYATIEKRIEEKPEGSYVAKLTTDDKKTAVNKICEKVGEEAAEVIIAAKDNDKAEIIYESADLIFHTMVLLAKSGITYEELSEEFKKRMK.

This sequence belongs to the PRA-PH family.

Its subcellular location is the cytoplasm. The catalysed reaction is 1-(5-phospho-beta-D-ribosyl)-ATP + H2O = 1-(5-phospho-beta-D-ribosyl)-5'-AMP + diphosphate + H(+). Its pathway is amino-acid biosynthesis; L-histidine biosynthesis; L-histidine from 5-phospho-alpha-D-ribose 1-diphosphate: step 2/9. This chain is Phosphoribosyl-ATP pyrophosphatase, found in Methanococcus maripaludis (strain DSM 14266 / JCM 13030 / NBRC 101832 / S2 / LL).